The primary structure comprises 348 residues: Dihydroorotase (348 aa).

Zn(2+) contacts are provided by His17 and His19. Substrate is bound by residues 19–21 (HLR) and Asn45. Zn(2+)-binding residues include Lys103, His140, and His178. Lys103 carries the N6-carboxylysine modification. A substrate-binding site is contributed by His140. Leu223 contacts substrate. Asp251 contacts Zn(2+). Asp251 is an active-site residue. Substrate contacts are provided by His255 and Ala267.

Belongs to the metallo-dependent hydrolases superfamily. DHOase family. Class II DHOase subfamily. As to quaternary structure, homodimer. Zn(2+) is required as a cofactor.

The catalysed reaction is (S)-dihydroorotate + H2O = N-carbamoyl-L-aspartate + H(+). Its pathway is pyrimidine metabolism; UMP biosynthesis via de novo pathway; (S)-dihydroorotate from bicarbonate: step 3/3. Its function is as follows. Catalyzes the reversible cyclization of carbamoyl aspartate to dihydroorotate. This is Dihydroorotase from Salmonella newport (strain SL254).